A 172-amino-acid chain; its full sequence is Large ribosomal subunit protein uL10 (172 aa).

Belongs to the universal ribosomal protein uL10 family. In terms of assembly, part of the ribosomal stalk of the 50S ribosomal subunit. The N-terminus interacts with L11 and the large rRNA to form the base of the stalk. The C-terminus forms an elongated spine to which L12 dimers bind in a sequential fashion forming a multimeric L10(L12)X complex.

Forms part of the ribosomal stalk, playing a central role in the interaction of the ribosome with GTP-bound translation factors. The protein is Large ribosomal subunit protein uL10 of Rhodospirillum centenum (strain ATCC 51521 / SW).